The following is an 896-amino-acid chain: Protein translocase subunit SecA (896 aa).

ATP-binding positions include Q87, 105–109 (GEGKT), and D507. The interval 853–879 (ESLSENDEASETQTFRRQEKKIGRNDP) is disordered. Positions 866–876 (TFRRQEKKIGR) are enriched in basic and acidic residues. Residues C880, C882, C891, and H892 each contribute to the Zn(2+) site.

It belongs to the SecA family. In terms of assembly, monomer and homodimer. Part of the essential Sec protein translocation apparatus which comprises SecA, SecYEG and auxiliary proteins SecDF-YajC and YidC. It depends on Zn(2+) as a cofactor.

It is found in the cell inner membrane. The protein localises to the cytoplasm. It catalyses the reaction ATP + H2O + cellular proteinSide 1 = ADP + phosphate + cellular proteinSide 2.. Its function is as follows. Part of the Sec protein translocase complex. Interacts with the SecYEG preprotein conducting channel. Has a central role in coupling the hydrolysis of ATP to the transfer of proteins into and across the cell membrane, serving both as a receptor for the preprotein-SecB complex and as an ATP-driven molecular motor driving the stepwise translocation of polypeptide chains across the membrane. This chain is Protein translocase subunit SecA, found in Legionella pneumophila subsp. pneumophila (strain Philadelphia 1 / ATCC 33152 / DSM 7513).